The chain runs to 281 residues: 4-hydroxy-3-methylbut-2-enyl diphosphate reductase (281 aa).

Residue Cys-12 coordinates [4Fe-4S] cluster. His-41 and His-74 together coordinate (2E)-4-hydroxy-3-methylbut-2-enyl diphosphate. Dimethylallyl diphosphate is bound by residues His-41 and His-74. Residues His-41 and His-74 each contribute to the isopentenyl diphosphate site. Cys-96 provides a ligand contact to [4Fe-4S] cluster. Position 124 (His-124) interacts with (2E)-4-hydroxy-3-methylbut-2-enyl diphosphate. His-124 contributes to the dimethylallyl diphosphate binding site. Residue His-124 participates in isopentenyl diphosphate binding. Glu-126 acts as the Proton donor in catalysis. Thr-164 provides a ligand contact to (2E)-4-hydroxy-3-methylbut-2-enyl diphosphate. Cys-193 lines the [4Fe-4S] cluster pocket. Ser-221, Asn-223, and Ser-265 together coordinate (2E)-4-hydroxy-3-methylbut-2-enyl diphosphate. The dimethylallyl diphosphate site is built by Ser-221, Asn-223, and Ser-265. Isopentenyl diphosphate contacts are provided by Ser-221, Asn-223, and Ser-265.

It belongs to the IspH family. [4Fe-4S] cluster is required as a cofactor.

It catalyses the reaction isopentenyl diphosphate + 2 oxidized [2Fe-2S]-[ferredoxin] + H2O = (2E)-4-hydroxy-3-methylbut-2-enyl diphosphate + 2 reduced [2Fe-2S]-[ferredoxin] + 2 H(+). It carries out the reaction dimethylallyl diphosphate + 2 oxidized [2Fe-2S]-[ferredoxin] + H2O = (2E)-4-hydroxy-3-methylbut-2-enyl diphosphate + 2 reduced [2Fe-2S]-[ferredoxin] + 2 H(+). It functions in the pathway isoprenoid biosynthesis; dimethylallyl diphosphate biosynthesis; dimethylallyl diphosphate from (2E)-4-hydroxy-3-methylbutenyl diphosphate: step 1/1. Its pathway is isoprenoid biosynthesis; isopentenyl diphosphate biosynthesis via DXP pathway; isopentenyl diphosphate from 1-deoxy-D-xylulose 5-phosphate: step 6/6. Functionally, catalyzes the conversion of 1-hydroxy-2-methyl-2-(E)-butenyl 4-diphosphate (HMBPP) into a mixture of isopentenyl diphosphate (IPP) and dimethylallyl diphosphate (DMAPP). Acts in the terminal step of the DOXP/MEP pathway for isoprenoid precursor biosynthesis. This Oleidesulfovibrio alaskensis (strain ATCC BAA-1058 / DSM 17464 / G20) (Desulfovibrio alaskensis) protein is 4-hydroxy-3-methylbut-2-enyl diphosphate reductase.